The primary structure comprises 180 residues: ATP synthase subunit delta, chloroplastic (180 aa).

Belongs to the ATPase delta chain family. In terms of assembly, F-type ATPases have 2 components, F(1) - the catalytic core - and F(0) - the membrane proton channel. F(1) has five subunits: alpha(3), beta(3), gamma(1), delta(1), epsilon(1). CF(0) has four main subunits: a(1), b(1), b'(1) and c(10-14). The alpha and beta chains form an alternating ring which encloses part of the gamma chain. F(1) is attached to F(0) by a central stalk formed by the gamma and epsilon chains, while a peripheral stalk is formed by the delta, b and b' chains.

The protein resides in the plastid. Its subcellular location is the chloroplast thylakoid membrane. In terms of biological role, f(1)F(0) ATP synthase produces ATP from ADP in the presence of a proton or sodium gradient. F-type ATPases consist of two structural domains, F(1) containing the extramembraneous catalytic core and F(0) containing the membrane proton channel, linked together by a central stalk and a peripheral stalk. During catalysis, ATP synthesis in the catalytic domain of F(1) is coupled via a rotary mechanism of the central stalk subunits to proton translocation. Its function is as follows. This protein is part of the stalk that links CF(0) to CF(1). It either transmits conformational changes from CF(0) to CF(1) or is implicated in proton conduction. The protein is ATP synthase subunit delta, chloroplastic of Emiliania huxleyi (Coccolithophore).